A 454-amino-acid chain; its full sequence is Tol-Pal system protein TolB (454 aa).

The N-terminal stretch at 1-30 (MNDARSITRRRFMTLTGSGLAMLGGGHAFA) is a signal peptide.

The protein belongs to the TolB family. The Tol-Pal system is composed of five core proteins: the inner membrane proteins TolA, TolQ and TolR, the periplasmic protein TolB and the outer membrane protein Pal. They form a network linking the inner and outer membranes and the peptidoglycan layer.

The protein resides in the periplasm. Its function is as follows. Part of the Tol-Pal system, which plays a role in outer membrane invagination during cell division and is important for maintaining outer membrane integrity. The polypeptide is Tol-Pal system protein TolB (Bradyrhizobium diazoefficiens (strain JCM 10833 / BCRC 13528 / IAM 13628 / NBRC 14792 / USDA 110)).